A 447-amino-acid chain; its full sequence is Retinoic acid receptor alpha (447 aa).

The modulating stretch occupies residues 1 to 79; that stretch reads MAGKGNPVPG…PPPPPRVYKP (79 aa). Residues 47 to 61 show a composition bias toward polar residues; the sequence is TPSPATIETQSTSSE. The tract at residues 47 to 72 is disordered; sequence TPSPATIETQSTSSEEIVPSPPSPPP. 2 NR C4-type zinc fingers span residues 80–100 and 116–140; these read CFVCQDKSSGYHYGVSACEGC and CHREKNCIINKVTRNRCQYCRLQKC. Positions 80-145 form a DNA-binding region, nuclear receptor; it reads CFVCQDKSSG…RLQKCLEVGM (66 aa). The segment at 146-174 is hinge; sequence SKESVRNDRNKKKKDEKKPECIENYVLSP. Residues 175–409 enclose the NR LBD domain; that stretch reads DTEQMINRVR…PLIQEMLENS (235 aa). A 9aaTAD motif is present at residues 400–408; that stretch reads PLIQEMLEN. The segment at 407-447 is disordered; it reads ENSEGLESGATGSRPSGAPPGSCSPSLSPSSAQSSPPTQSP. The segment covering 414–447 has biased composition (low complexity); that stretch reads SGATGSRPSGAPPGSCSPSLSPSSAQSSPPTQSP.

It belongs to the nuclear hormone receptor family. NR1 subfamily. In terms of assembly, heterodimer; with an rxr molecule. Binds DNA preferentially as a rar/rxr heterodimer.

It is found in the nucleus. Functionally, receptor for retinoic acid. Retinoic acid receptors bind as heterodimers to their target response elements in response to their ligands, all-trans or 9-cis retinoic acid, and regulate gene expression in various biological processes. The rar/rxr heterodimers bind to the retinoic acid response elements (RARE) composed of tandem 5'-AGGTCA-3' sites known as DR1-DR5. The chain is Retinoic acid receptor alpha (rara) from Takifugu rubripes (Japanese pufferfish).